The primary structure comprises 165 residues: NAD(P)H-quinone oxidoreductase subunit J, chloroplastic (165 aa).

This sequence belongs to the complex I 30 kDa subunit family. In terms of assembly, NDH is composed of at least 16 different subunits, 5 of which are encoded in the nucleus.

It localises to the plastid. Its subcellular location is the chloroplast thylakoid membrane. The catalysed reaction is a plastoquinone + NADH + (n+1) H(+)(in) = a plastoquinol + NAD(+) + n H(+)(out). It carries out the reaction a plastoquinone + NADPH + (n+1) H(+)(in) = a plastoquinol + NADP(+) + n H(+)(out). Its function is as follows. NDH shuttles electrons from NAD(P)H:plastoquinone, via FMN and iron-sulfur (Fe-S) centers, to quinones in the photosynthetic chain and possibly in a chloroplast respiratory chain. The immediate electron acceptor for the enzyme in this species is believed to be plastoquinone. Couples the redox reaction to proton translocation, and thus conserves the redox energy in a proton gradient. This Ipomoea purpurea (Common morning glory) protein is NAD(P)H-quinone oxidoreductase subunit J, chloroplastic.